A 2055-amino-acid chain; its full sequence is Dedicator of cytokinesis protein 9 (2055 aa).

Phosphoserine occurs at positions 178 and 181. Positions 185 to 292 constitute a PH domain; sequence GITKHGWLYK…WVTVLNKILQ (108 aa). The disordered stretch occupies residues 301–326; the sequence is EKRNGDPHEDDEQSKLEGSGSGLDSY. Phosphoserine is present on residues S444 and S453. A C2 DOCK-type domain is found at 649-827; sequence SNHLYVYPKY…PLLKISTHLV (179 aa). S936 and S1244 each carry phosphoserine. T1250 is modified (phosphothreonine). The segment at 1253 to 1291 is disordered; the sequence is INSVRNADSRGSLISTDSGNSLPDRNPEKSNSLDKQQQS. 3 positions are modified to phosphoserine: S1264, S1270, and S1273. Polar residues predominate over residues 1264–1276; sequence SLISTDSGNSLPD. The DOCKER domain occupies 1614-2055; that stretch reads KSYASTPELR…LSDIMREQMG (442 aa). Residues 1679–2055 form an interaction with CDC42 region; it reads DEEASMMEDV…LSDIMREQMG (377 aa).

This sequence belongs to the DOCK family. Homodimer. Interacts preferentially with nucleotide-depleted CDC42. Expressed in lung. Also detected in Peyers patches, thymus, brain and lymph nodes. Expressed in Purkinje cells.

The protein localises to the endomembrane system. In terms of biological role, guanine nucleotide-exchange factor (GEF) that activates CDC42 by exchanging bound GDP for free GTP. Overexpression induces filopodia formation. The polypeptide is Dedicator of cytokinesis protein 9 (Mus musculus (Mouse)).